An 89-amino-acid polypeptide reads, in one-letter code: Large ribosomal subunit protein bL31B (89 aa).

It belongs to the bacterial ribosomal protein bL31 family. Type B subfamily. As to quaternary structure, part of the 50S ribosomal subunit.

This Enterococcus faecalis (strain ATCC 700802 / V583) protein is Large ribosomal subunit protein bL31B.